Here is a 343-residue protein sequence, read N- to C-terminus: S-adenosylmethionine:tRNA ribosyltransferase-isomerase (343 aa).

The protein belongs to the QueA family. Monomer.

The protein resides in the cytoplasm. The enzyme catalyses 7-aminomethyl-7-carbaguanosine(34) in tRNA + S-adenosyl-L-methionine = epoxyqueuosine(34) in tRNA + adenine + L-methionine + 2 H(+). The protein operates within tRNA modification; tRNA-queuosine biosynthesis. In terms of biological role, transfers and isomerizes the ribose moiety from AdoMet to the 7-aminomethyl group of 7-deazaguanine (preQ1-tRNA) to give epoxyqueuosine (oQ-tRNA). This chain is S-adenosylmethionine:tRNA ribosyltransferase-isomerase, found in Dehalococcoides mccartyi (strain CBDB1).